Reading from the N-terminus, the 185-residue chain is Ribosome-recycling factor (185 aa).

The protein belongs to the RRF family.

The protein localises to the cytoplasm. Functionally, responsible for the release of ribosomes from messenger RNA at the termination of protein biosynthesis. May increase the efficiency of translation by recycling ribosomes from one round of translation to another. The protein is Ribosome-recycling factor of Listeria innocua serovar 6a (strain ATCC BAA-680 / CLIP 11262).